The chain runs to 153 residues: UPF0225 protein ETA_15740 (153 aa).

The protein belongs to the UPF0225 family.

The protein is UPF0225 protein ETA_15740 of Erwinia tasmaniensis (strain DSM 17950 / CFBP 7177 / CIP 109463 / NCPPB 4357 / Et1/99).